The sequence spans 358 residues: DNA polymerase IV (358 aa).

Residues 4-185 enclose the UmuC domain; that stretch reads IIHIDMDCYF…LSLRKIPGVG (182 aa). Residues Asp-8 and Asp-103 each coordinate Mg(2+). Glu-104 is an active-site residue.

It belongs to the DNA polymerase type-Y family. Monomer. Mg(2+) serves as cofactor.

It is found in the cytoplasm. The catalysed reaction is DNA(n) + a 2'-deoxyribonucleoside 5'-triphosphate = DNA(n+1) + diphosphate. In terms of biological role, poorly processive, error-prone DNA polymerase involved in untargeted mutagenesis. Copies undamaged DNA at stalled replication forks, which arise in vivo from mismatched or misaligned primer ends. These misaligned primers can be extended by PolIV. Exhibits no 3'-5' exonuclease (proofreading) activity. May be involved in translesional synthesis, in conjunction with the beta clamp from PolIII. The chain is DNA polymerase IV from Shewanella sp. (strain W3-18-1).